A 254-amino-acid chain; its full sequence is Guanylate kinase (254 aa).

One can recognise a Guanylate kinase-like domain in the interval 64 to 243 (KHLVVLAGPT…AAREVVDLMM (180 aa)). 71–78 (GPTAVGKG) is a binding site for ATP.

This sequence belongs to the guanylate kinase family.

Its subcellular location is the cytoplasm. It carries out the reaction GMP + ATP = GDP + ADP. Essential for recycling GMP and indirectly, cGMP. The chain is Guanylate kinase from Leifsonia xyli subsp. xyli (strain CTCB07).